Consider the following 141-residue polypeptide: Putative pre-16S rRNA nuclease (141 aa).

It belongs to the YqgF nuclease family.

Its subcellular location is the cytoplasm. In terms of biological role, could be a nuclease involved in processing of the 5'-end of pre-16S rRNA. The polypeptide is Putative pre-16S rRNA nuclease (Sodalis glossinidius (strain morsitans)).